Consider the following 252-residue polypeptide: 2-succinyl-6-hydroxy-2,4-cyclohexadiene-1-carboxylate synthase (252 aa).

Belongs to the AB hydrolase superfamily. MenH family. As to quaternary structure, monomer.

It catalyses the reaction 5-enolpyruvoyl-6-hydroxy-2-succinyl-cyclohex-3-ene-1-carboxylate = (1R,6R)-6-hydroxy-2-succinyl-cyclohexa-2,4-diene-1-carboxylate + pyruvate. Its pathway is quinol/quinone metabolism; 1,4-dihydroxy-2-naphthoate biosynthesis; 1,4-dihydroxy-2-naphthoate from chorismate: step 3/7. It participates in quinol/quinone metabolism; menaquinone biosynthesis. Its function is as follows. Catalyzes a proton abstraction reaction that results in 2,5-elimination of pyruvate from 2-succinyl-5-enolpyruvyl-6-hydroxy-3-cyclohexene-1-carboxylate (SEPHCHC) and the formation of 2-succinyl-6-hydroxy-2,4-cyclohexadiene-1-carboxylate (SHCHC). The sequence is that of 2-succinyl-6-hydroxy-2,4-cyclohexadiene-1-carboxylate synthase from Salmonella enteritidis PT4 (strain P125109).